The primary structure comprises 39 residues: Photosystem II reaction center protein L (39 aa).

The helical transmembrane segment at 18–38 (SLYLGVLSVLVLGILFSSYFF) threads the bilayer.

This sequence belongs to the PsbL family. PSII is composed of 1 copy each of membrane proteins PsbA, PsbB, PsbC, PsbD, PsbE, PsbF, PsbH, PsbI, PsbJ, PsbK, PsbL, PsbM, PsbT, PsbX, PsbY, Psb30/Ycf12, peripheral proteins PsbO, CyanoQ (PsbQ), PsbU, PsbV and a large number of cofactors. It forms dimeric complexes.

It is found in the cellular thylakoid membrane. One of the components of the core complex of photosystem II (PSII). PSII is a light-driven water:plastoquinone oxidoreductase that uses light energy to abstract electrons from H(2)O, generating O(2) and a proton gradient subsequently used for ATP formation. It consists of a core antenna complex that captures photons, and an electron transfer chain that converts photonic excitation into a charge separation. This subunit is found at the monomer-monomer interface and is required for correct PSII assembly and/or dimerization. This Prochlorococcus marinus (strain MIT 9515) protein is Photosystem II reaction center protein L.